The chain runs to 149 residues: Lipoprotein signal peptidase (149 aa).

Transmembrane regions (helical) follow at residues M53–I73 and G89–I109. Catalysis depends on residues D110 and D124. The chain crosses the membrane as a helical span at residues V119–L139.

This sequence belongs to the peptidase A8 family.

It is found in the cell membrane. It carries out the reaction Release of signal peptides from bacterial membrane prolipoproteins. Hydrolyzes -Xaa-Yaa-Zaa-|-(S,diacylglyceryl)Cys-, in which Xaa is hydrophobic (preferably Leu), and Yaa (Ala or Ser) and Zaa (Gly or Ala) have small, neutral side chains.. It functions in the pathway protein modification; lipoprotein biosynthesis (signal peptide cleavage). This protein specifically catalyzes the removal of signal peptides from prolipoproteins. The sequence is that of Lipoprotein signal peptidase from Syntrophomonas wolfei subsp. wolfei (strain DSM 2245B / Goettingen).